A 291-amino-acid chain; its full sequence is 4-diphosphocytidyl-2-C-methyl-D-erythritol kinase (291 aa).

Lys-19 is an active-site residue. Residue 102 to 112 (PMGGGIGGGSS) coordinates ATP. The active site involves Asp-144.

It belongs to the GHMP kinase family. IspE subfamily.

The catalysed reaction is 4-CDP-2-C-methyl-D-erythritol + ATP = 4-CDP-2-C-methyl-D-erythritol 2-phosphate + ADP + H(+). The protein operates within isoprenoid biosynthesis; isopentenyl diphosphate biosynthesis via DXP pathway; isopentenyl diphosphate from 1-deoxy-D-xylulose 5-phosphate: step 3/6. Functionally, catalyzes the phosphorylation of the position 2 hydroxy group of 4-diphosphocytidyl-2C-methyl-D-erythritol. In Ectopseudomonas mendocina (strain ymp) (Pseudomonas mendocina), this protein is 4-diphosphocytidyl-2-C-methyl-D-erythritol kinase.